The chain runs to 317 residues: Acetyl-coenzyme A carboxylase carboxyl transferase subunit beta (317 aa).

Residues 1–28 (MANNMTDTMTKPDINNDSTSLQQNGNKA) form a disordered region. One can recognise a CoA carboxyltransferase N-terminal domain in the interval 55-317 (PSTKCSSCHS…LCSVPNVDVQ (263 aa)). 4 residues coordinate Zn(2+): C59, C62, C78, and C81. The C4-type zinc-finger motif lies at 59 to 81 (CSSCHSIITNTALIFNCYVCPHC).

Belongs to the AccD/PCCB family. As to quaternary structure, acetyl-CoA carboxylase is a heterohexamer composed of biotin carboxyl carrier protein (AccB), biotin carboxylase (AccC) and two subunits each of ACCase subunit alpha (AccA) and ACCase subunit beta (AccD). The cofactor is Zn(2+).

It localises to the cytoplasm. The catalysed reaction is N(6)-carboxybiotinyl-L-lysyl-[protein] + acetyl-CoA = N(6)-biotinyl-L-lysyl-[protein] + malonyl-CoA. It participates in lipid metabolism; malonyl-CoA biosynthesis; malonyl-CoA from acetyl-CoA: step 1/1. In terms of biological role, component of the acetyl coenzyme A carboxylase (ACC) complex. Biotin carboxylase (BC) catalyzes the carboxylation of biotin on its carrier protein (BCCP) and then the CO(2) group is transferred by the transcarboxylase to acetyl-CoA to form malonyl-CoA. This chain is Acetyl-coenzyme A carboxylase carboxyl transferase subunit beta, found in Psychrobacter cryohalolentis (strain ATCC BAA-1226 / DSM 17306 / VKM B-2378 / K5).